The primary structure comprises 369 residues: UDP-N-acetylglucosamine--N-acetylmuramyl-(pentapeptide) pyrophosphoryl-undecaprenol N-acetylglucosamine transferase (369 aa).

UDP-N-acetyl-alpha-D-glucosamine-binding positions include 15–17 (TGG), Asn126, Arg169, Ser197, and Gln299.

This sequence belongs to the glycosyltransferase 28 family. MurG subfamily.

It localises to the cell inner membrane. It carries out the reaction di-trans,octa-cis-undecaprenyl diphospho-N-acetyl-alpha-D-muramoyl-L-alanyl-D-glutamyl-meso-2,6-diaminopimeloyl-D-alanyl-D-alanine + UDP-N-acetyl-alpha-D-glucosamine = di-trans,octa-cis-undecaprenyl diphospho-[N-acetyl-alpha-D-glucosaminyl-(1-&gt;4)]-N-acetyl-alpha-D-muramoyl-L-alanyl-D-glutamyl-meso-2,6-diaminopimeloyl-D-alanyl-D-alanine + UDP + H(+). It participates in cell wall biogenesis; peptidoglycan biosynthesis. Its function is as follows. Cell wall formation. Catalyzes the transfer of a GlcNAc subunit on undecaprenyl-pyrophosphoryl-MurNAc-pentapeptide (lipid intermediate I) to form undecaprenyl-pyrophosphoryl-MurNAc-(pentapeptide)GlcNAc (lipid intermediate II). The chain is UDP-N-acetylglucosamine--N-acetylmuramyl-(pentapeptide) pyrophosphoryl-undecaprenol N-acetylglucosamine transferase from Methylorubrum extorquens (strain PA1) (Methylobacterium extorquens).